We begin with the raw amino-acid sequence, 92 residues long: Small ribosomal subunit protein uS19c (92 aa).

The protein belongs to the universal ribosomal protein uS19 family.

Its subcellular location is the plastid. The protein resides in the chloroplast. Functionally, protein S19 forms a complex with S13 that binds strongly to the 16S ribosomal RNA. This Pyropia yezoensis (Susabi-nori) protein is Small ribosomal subunit protein uS19c.